The primary structure comprises 380 residues: Lipid-A-disaccharide synthase (380 aa).

It belongs to the LpxB family.

The enzyme catalyses a lipid X + a UDP-2-N,3-O-bis[(3R)-3-hydroxyacyl]-alpha-D-glucosamine = a lipid A disaccharide + UDP + H(+). It participates in bacterial outer membrane biogenesis; LPS lipid A biosynthesis. In terms of biological role, condensation of UDP-2,3-diacylglucosamine and 2,3-diacylglucosamine-1-phosphate to form lipid A disaccharide, a precursor of lipid A, a phosphorylated glycolipid that anchors the lipopolysaccharide to the outer membrane of the cell. The sequence is that of Lipid-A-disaccharide synthase from Francisella tularensis subsp. tularensis (strain FSC 198).